Reading from the N-terminus, the 548-residue chain is MAAKEVRFSDDARVKMLAGVNILANAVKVTLGPKGRNVVLDKSFGAPTITKDGVSVAKEIELEDKFENMGAQMVKEVASKANDEAGDGTTTATVLAQSIVTEGLKAVAAGMNPMDLKRGIDKAVIAAVEQLKTLSVPCADSKAIAQVGTISANSDTEVGDLIAEAMDKVGKEGVITVEEGQSLQNELEVVEGMQFDRGYLSPYFMNNQENGTVELDSPFILLVDKKVSNIRELLPTLEAVAKASKPLLIIAEDVEGEALATLVVNNMRGIVKVAAVKAPGFGDRRKAMLQDLATLTGGTVISEEIGLELEKVTLEDLGTAKRVVINKDNTTVVDGAGEEEAIQGRVAQIRAQIEESSSDYDKEKLQERLAKLAGGVAVIKVGAATEVEMKEKKDRVEDALHATRAAVEEGVVAGGGVALVRAASKIVDLQGDNEDQTHGIKLLLRAMESPMRQIAANAGAEASVVTNAVKNGADNYGYNAGNDTYGDMLEMGILDPTKVTRSALQFAASIASLMITTEAMIAEAPKEDAPAMPDMGGMGGMGGMGGMM.

ATP is bound by residues 30 to 33 (TLGP), Lys51, 87 to 91 (DGTTT), Gly415, and Asp495.

Belongs to the chaperonin (HSP60) family. In terms of assembly, forms a cylinder of 14 subunits composed of two heptameric rings stacked back-to-back. Interacts with the co-chaperonin GroES.

The protein resides in the cytoplasm. It carries out the reaction ATP + H2O + a folded polypeptide = ADP + phosphate + an unfolded polypeptide.. Together with its co-chaperonin GroES, plays an essential role in assisting protein folding. The GroEL-GroES system forms a nano-cage that allows encapsulation of the non-native substrate proteins and provides a physical environment optimized to promote and accelerate protein folding. In Pseudoalteromonas atlantica (strain T6c / ATCC BAA-1087), this protein is Chaperonin GroEL.